The primary structure comprises 444 residues: Sensor protein CiaH (444 aa).

Transmembrane regions (helical) follow at residues 21–41 and 183–203; these read FGVF…VMHS and LIVV…LYLA. A Histidine kinase domain is found at 223–438; that stretch reads NASHELRTPL…IFEVKIAIQT (216 aa). At histidine 226 the chain carries Phosphohistidine; by autocatalysis.

The protein resides in the cell membrane. The catalysed reaction is ATP + protein L-histidine = ADP + protein N-phospho-L-histidine.. Its function is as follows. Member of the two-component regulatory system CiaH/CiaR. Involved in early steps of competence regulation and in penicillin susceptibility. Probably phosphorylates CiaR. This is Sensor protein CiaH (ciaH) from Streptococcus pneumoniae serotype 4 (strain ATCC BAA-334 / TIGR4).